The primary structure comprises 274 residues: Large ribosomal subunit protein uL2 (274 aa).

The interval Val223–Lys274 is disordered.

Belongs to the universal ribosomal protein uL2 family. Part of the 50S ribosomal subunit. Forms a bridge to the 30S subunit in the 70S ribosome.

In terms of biological role, one of the primary rRNA binding proteins. Required for association of the 30S and 50S subunits to form the 70S ribosome, for tRNA binding and peptide bond formation. It has been suggested to have peptidyltransferase activity; this is somewhat controversial. Makes several contacts with the 16S rRNA in the 70S ribosome. The protein is Large ribosomal subunit protein uL2 of Aliivibrio salmonicida (strain LFI1238) (Vibrio salmonicida (strain LFI1238)).